A 528-amino-acid chain; its full sequence is tRNA-2-methylthio-N(6)-dimethylallyladenosine synthase (528 aa).

The MTTase N-terminal domain maps to 19-134 (RTYEVRTYGC…LPTLLERARH (116 aa)). 6 residues coordinate [4Fe-4S] cluster: cysteine 28, cysteine 63, cysteine 97, cysteine 171, cysteine 175, and cysteine 178. Residues 157 to 387 (RDEIASGWVS…TALQERISHE (231 aa)) form the Radical SAM core domain. One can recognise a TRAM domain in the interval 390 to 460 (QRVVGRTVEV…PFHLIADSVD (71 aa)).

It belongs to the methylthiotransferase family. MiaB subfamily. In terms of assembly, monomer. [4Fe-4S] cluster is required as a cofactor.

It is found in the cytoplasm. It carries out the reaction N(6)-dimethylallyladenosine(37) in tRNA + (sulfur carrier)-SH + AH2 + 2 S-adenosyl-L-methionine = 2-methylsulfanyl-N(6)-dimethylallyladenosine(37) in tRNA + (sulfur carrier)-H + 5'-deoxyadenosine + L-methionine + A + S-adenosyl-L-homocysteine + 2 H(+). Its function is as follows. Catalyzes the methylthiolation of N6-(dimethylallyl)adenosine (i(6)A), leading to the formation of 2-methylthio-N6-(dimethylallyl)adenosine (ms(2)i(6)A) at position 37 in tRNAs that read codons beginning with uridine. The chain is tRNA-2-methylthio-N(6)-dimethylallyladenosine synthase from Clavibacter michiganensis subsp. michiganensis (strain NCPPB 382).